Reading from the N-terminus, the 353-residue chain is Photosystem II protein D1 (353 aa).

Threonine 2 bears the N-acetylthreonine mark. Phosphothreonine is present on threonine 2. 3 helical membrane passes run 29-46 (YIGWFGVLMIPTLLTATS), 118-133 (HFLLGVACYMGREWEL), and 142-156 (WIAVAYSAPVAAATA). A chlorophyll a-binding site is contributed by histidine 118. Tyrosine 126 contacts pheophytin a. [CaMn4O5] cluster-binding residues include aspartate 170 and glutamate 189. Residues 197-218 (FHMLGVAGVFGGSLFSAMHGSL) traverse the membrane as a helical segment. Residue histidine 198 participates in chlorophyll a binding. Residues histidine 215 and 264-265 (SF) contribute to the a quinone site. Residue histidine 215 coordinates Fe cation. Position 272 (histidine 272) interacts with Fe cation. Residues 274–288 (FLAAWPVVGIWFTAL) form a helical membrane-spanning segment. [CaMn4O5] cluster is bound by residues histidine 332, glutamate 333, aspartate 342, and alanine 344. Residues 345 to 353 (ALEVPSING) constitute a propeptide that is removed on maturation.

It belongs to the reaction center PufL/M/PsbA/D family. PSII is composed of 1 copy each of membrane proteins PsbA, PsbB, PsbC, PsbD, PsbE, PsbF, PsbH, PsbI, PsbJ, PsbK, PsbL, PsbM, PsbT, PsbX, PsbY, PsbZ, Psb30/Ycf12, at least 3 peripheral proteins of the oxygen-evolving complex and a large number of cofactors. It forms dimeric complexes. The D1/D2 heterodimer binds P680, chlorophylls that are the primary electron donor of PSII, and subsequent electron acceptors. It shares a non-heme iron and each subunit binds pheophytin, quinone, additional chlorophylls, carotenoids and lipids. D1 provides most of the ligands for the Mn4-Ca-O5 cluster of the oxygen-evolving complex (OEC). There is also a Cl(-1) ion associated with D1 and D2, which is required for oxygen evolution. The PSII complex binds additional chlorophylls, carotenoids and specific lipids. is required as a cofactor. In terms of processing, tyr-161 forms a radical intermediate that is referred to as redox-active TyrZ, YZ or Y-Z. C-terminally processed by CTPA; processing is essential to allow assembly of the oxygen-evolving complex and thus photosynthetic growth.

The protein localises to the plastid. It is found in the chloroplast thylakoid membrane. The catalysed reaction is 2 a plastoquinone + 4 hnu + 2 H2O = 2 a plastoquinol + O2. In terms of biological role, photosystem II (PSII) is a light-driven water:plastoquinone oxidoreductase that uses light energy to abstract electrons from H(2)O, generating O(2) and a proton gradient subsequently used for ATP formation. It consists of a core antenna complex that captures photons, and an electron transfer chain that converts photonic excitation into a charge separation. The D1/D2 (PsbA/PsbD) reaction center heterodimer binds P680, the primary electron donor of PSII as well as several subsequent electron acceptors. This chain is Photosystem II protein D1, found in Agrostis stolonifera (Creeping bentgrass).